We begin with the raw amino-acid sequence, 796 residues long: MSLNFTEYEAKWQKKWADAKAFQAETTSSKPKYYALDMFPYPSASGLHVGHMASYTPGDIISRYKRVNGFNVLHPMGYDAFGLPAEQYAIQTGVHPAITTKKAIDSFRKTLQTFGFSFDWSREISTCEPDYYKWTQFIFLKLYERGLAYQKEVPVNWCPALKTVLANDEVVDGKSERGGHPVIRVPMKQWMLKITDYAERLLNDLDKLDWPERTKEGQRNWIGKSEGARITFKVHGEKDTFEVFTTRPDTLFGVTFMVMAPEHPLVKKITSQPQYTAVENYIADTAKKSEVDRKASTEKTGVFTGAHATHPITGDKIEIWISDYVLMDYGTGAIMAVPGHDARDFEFATKFNIPIKSVLESDMLPFEGDSIMINSEFLDGLNKTEAISKMLKHLEENKLGVREVQYKLRDWLFSRQRYWGEPFPIVHFADGSKGVPVNELPVILPEVADYEPADTGEAPLARNADWVKYMDGDKEGRRETDTMPGAAGSSWYFLRYIDPKNTEAPFSPEAEKYWMPVDLYVGGPEHTVGHLLYARFWTKVLFDCGLVTHDEPFQKLAHQGMILGPDGEKMSKSRGNVISPEDIARSHGADALRTFISFMGPVDKDKPWAPTGIDGVKRFLDRITRLVVNDDGQLVATSEALTPEIEKLVHKTIKKVTEDIESMSFNTAISAMMILVNELYRAECRSVLAVKPLVQILAPFAPHLAEELWEKMNGEGLCALAPWPKYDNTLCADDTVTIGVQVNGKMRGTIEIGVAASEQEAVAAAKAVQQVAAVLGDKNPDKVIYKAGKILNLIVK.

The 'HIGH' region motif lies at Pro-40–His-51. A 'KMSKS' region motif is present at residues Lys-569–Ser-573. Lys-572 contacts ATP.

This sequence belongs to the class-I aminoacyl-tRNA synthetase family.

It localises to the cytoplasm. The enzyme catalyses tRNA(Leu) + L-leucine + ATP = L-leucyl-tRNA(Leu) + AMP + diphosphate. In Bdellovibrio bacteriovorus (strain ATCC 15356 / DSM 50701 / NCIMB 9529 / HD100), this protein is Leucine--tRNA ligase.